The primary structure comprises 131 residues: DNA-directed RNA polymerase subunit omega (131 aa).

The segment at 78–131 (DEPEAEAVPALSSAPDAAQSDAMGDVQFDRMTEEDLLRGLEGLVPPAATDDDGE) is disordered. A compositionally biased stretch (basic and acidic residues) spans 104–115 (QFDRMTEEDLLR).

This sequence belongs to the RNA polymerase subunit omega family. The RNAP catalytic core consists of 2 alpha, 1 beta, 1 beta' and 1 omega subunit. When a sigma factor is associated with the core the holoenzyme is formed, which can initiate transcription.

The enzyme catalyses RNA(n) + a ribonucleoside 5'-triphosphate = RNA(n+1) + diphosphate. Promotes RNA polymerase assembly. Latches the N- and C-terminal regions of the beta' subunit thereby facilitating its interaction with the beta and alpha subunits. The chain is DNA-directed RNA polymerase subunit omega from Beijerinckia indica subsp. indica (strain ATCC 9039 / DSM 1715 / NCIMB 8712).